Consider the following 315-residue polypeptide: Olfactory receptor 3A2 (315 aa).

Residues 1–29 (MEPEAGTNRTAVAEFILLGLVQTEEMQPV) are Extracellular-facing. Residue N8 is glycosylated (N-linked (GlcNAc...) asparagine). The helical transmembrane segment at 30 to 52 (VFVLFLFAYLVTIGGNLSILAAI) threads the bilayer. Topologically, residues 53–60 (LVEPKLHA) are cytoplasmic. A helical membrane pass occupies residues 61–82 (PMYFFLGNLSVLDVGCITVTVP). The Extracellular segment spans residues 83 to 103 (AMLGRLLSHKSTISYDACLSQ). C100 and C192 are disulfide-bonded. A helical transmembrane segment spans residues 104-123 (LFFFHLLAGMDCFLLTAMAY). Over 124 to 143 (DRFLAICWPLTYSTRMSQTV) the chain is Cytoplasmic. The chain crosses the membrane as a helical span at residues 144-161 (QRMLVAASWACAFTNALT). The Extracellular segment spans residues 162–199 (HTVAMSTLNFCGPNEVNHFYCDLPQLFQLSCSSTQLNE). A helical membrane pass occupies residues 200 to 223 (LLLFAVGFIMAGTPLVLIITSYSH). Over 224–240 (VAAAVLRIRSVEGWKKA) the chain is Cytoplasmic. A helical transmembrane segment spans residues 241 to 264 (FSTCGSHLTVVCLFFGTGIFNYMR). Topologically, residues 265 to 275 (LGSEEASDKDK) are extracellular. Residues 276 to 295 (GVGVFNTVINPMLNPLIYSL) form a helical membrane-spanning segment. Residues 296–315 (RNPDVQGALWRIFLGRRSLT) lie on the Cytoplasmic side of the membrane.

Belongs to the G-protein coupled receptor 1 family.

The protein resides in the cell membrane. Functionally, odorant receptor. This Pan troglodytes (Chimpanzee) protein is Olfactory receptor 3A2 (OR3A2).